Consider the following 432-residue polypeptide: Sphingosine N-acyltransferase-like protein ALT7 (432 aa).

Residues 55–75 (IGLSLGSLLLLILMFTCLPYY) traverse the membrane as a helical segment. Asn-77 is a glycosylation site (N-linked (GlcNAc...) asparagine). 7 helical membrane-spanning segments follow: residues 91 to 111 (FIFS…IYLL), 128 to 148 (FTEQ…GMYI), 172 to 192 (GLTK…IVVV), 226 to 246 (VGNV…FAKL), 250 to 270 (LGFQ…WLVA), 273 to 293 (GLYL…MPYG), and 338 to 358 (AFLG…GMIL). In terms of domain architecture, TLC spans 123–366 (KLMVRFTEQG…ILKVAYKVFQ (244 aa)). Residues 370–395 (ADDTRSDSEESGYGTSDHEGDCYGAQ) form a disordered region.

It belongs to the sphingosine N-acyltransferase family.

The protein localises to the membrane. It participates in mycotoxin biosynthesis. Sphingosine N-acyltransferase-like protein; part of the gene cluster that mediates the biosynthesis of the host-selective toxins (HSTs) AAL-toxins, sphinganine-analog mycotoxins responsible for Alternaria stem canker on tomato by the tomato pathotype. The biosynthesis starts with the polyketide synthase ALT1-catalyzed C-16 carbon chain assembly from one starter acetyl-CoA unit with malonyl-CoA extender units. ALT1 also selectively transfers methyl groups at the first and the third cycle of chain elongation for AAL toxin. The C-16 polyketide chain is released from the enzyme by a nucleophilic attack of a carbanion, which is derived from R-carbon of glycin by decarboxylation, on the carbonyl carbon of polyketide acyl chain. This step is probably catalyzed by a pyridoxal 5'-phosphate-dependent aminoacyl transferase ALT4. The respective functions of the other enzymes encoded by the cluster have still to be elucidated. The sphingosine N-acyltransferase-like protein ALT7 seems not to act as a resistance/self-tolerance factor against the toxin in the toxin biosynthetic gene cluster, contrary to what is expected. This Alternaria alternata (Alternaria rot fungus) protein is Sphingosine N-acyltransferase-like protein ALT7.